Here is a 334-residue protein sequence, read N- to C-terminus: MSTEVISTSVVSEPTQEILPAEYSLDAPEPEHCPGPESEMAGKADACQTCENKDICESLPKGPDPDIPLITENLSGIKHKILVLSGKGGVGKSTFTTMLSWALSADDNLQVGAMDLDICGPSLPHMLGCTDEVVHESNTGWTPVYVAENLAAMSIQFMLPEDDSAVIWRGNKKNLLIKKFLKDVVWDDLDYLVVDTPPGTSDEHISINKYMKESGIDGALVVTTPQEVALLDVRKEIDFCRKAGINILGLVENMSGFVCPNCKGESQIFKPTTGGGEALCKELGIKFLGSVPLDPRIGRCSDEGESFLDEFPDSPATLAVLNVVEELRDAVGDV.

[4Fe-4S] cluster contacts are provided by Cys-33, Cys-47, Cys-50, and Cys-56. Residue 86–93 (GKGGVGKS) coordinates ATP. Residues Cys-259 and Cys-262 each contribute to the [4Fe-4S] cluster site.

This sequence belongs to the Mrp/NBP35 ATP-binding proteins family. NUBP1/NBP35 subfamily. Heterotetramer of 2 NBP35 and 2 CFD1 chains. It depends on [4Fe-4S] cluster as a cofactor.

It localises to the cytoplasm. The protein localises to the nucleus. In terms of biological role, component of the cytosolic iron-sulfur (Fe/S) protein assembly (CIA) machinery. Required for maturation of extramitochondrial Fe-S proteins. The NBP35-CFD1 heterotetramer forms a Fe-S scaffold complex, mediating the de novo assembly of an Fe-S cluster and its transfer to target apoproteins. Required for biogenesis and export of both ribosomal subunits, which may reflect a role in assembly of the Fe/S clusters in RLI1, a protein which performs rRNA processing and ribosome export. The polypeptide is Cytosolic Fe-S cluster assembly factor NBP35 (Candida glabrata (strain ATCC 2001 / BCRC 20586 / JCM 3761 / NBRC 0622 / NRRL Y-65 / CBS 138) (Yeast)).